We begin with the raw amino-acid sequence, 505 residues long: Lysine--tRNA ligase (505 aa).

Mg(2+)-binding residues include glutamate 415 and glutamate 422.

This sequence belongs to the class-II aminoacyl-tRNA synthetase family. As to quaternary structure, homodimer. Requires Mg(2+) as cofactor.

The protein resides in the cytoplasm. The enzyme catalyses tRNA(Lys) + L-lysine + ATP = L-lysyl-tRNA(Lys) + AMP + diphosphate. This Citrobacter koseri (strain ATCC BAA-895 / CDC 4225-83 / SGSC4696) protein is Lysine--tRNA ligase.